A 410-amino-acid chain; its full sequence is Peptidase T (410 aa).

A Zn(2+)-binding site is contributed by H77. D79 is an active-site residue. D140 contributes to the Zn(2+) binding site. E174 acts as the Proton acceptor in catalysis. Zn(2+)-binding residues include E175, D197, and H379.

Belongs to the peptidase M20B family. Zn(2+) serves as cofactor.

It localises to the cytoplasm. It carries out the reaction Release of the N-terminal residue from a tripeptide.. Functionally, cleaves the N-terminal amino acid of tripeptides. This is Peptidase T from Desulfitobacterium hafniense (strain DSM 10664 / DCB-2).